We begin with the raw amino-acid sequence, 1113 residues long: Carbamoyl phosphate synthase arginine-specific large chain (1113 aa).

The segment at 23 to 420 (QLIKGIDSVL…AFQKAFRQVD (398 aa)) is carboxyphosphate synthetic domain. ATP is bound by residues Arg150, Arg190, Gly196, Gly197, Lys227, Leu229, Glu234, Gly260, Ile261, His262, Gln303, and Glu317. Positions 154–346 (ARALKEINMP…LAYTAAKIAL (193 aa)) constitute an ATP-grasp 1 domain. Gln303, Glu317, and Asn319 together coordinate Mg(2+). Mn(2+)-binding residues include Gln303, Glu317, and Asn319. Positions 421 to 568 (PSLLGFQGSD…YVTYNAVKDD (148 aa)) are oligomerization domain. The interval 569–955 (VTFGDNGIMV…SYWVALQGLM (387 aa)) is carbamoyl phosphate synthetic domain. The region spanning 693–888 (STILDTLGLD…FVEIAVKAFL (196 aa)) is the ATP-grasp 2 domain. ATP-binding residues include Arg729, Lys768, Ile770, Glu775, Gly800, Val801, His802, Ser803, Gln843, and Glu859. The Mg(2+) site is built by Gln843, Glu859, and Asn861. Mn(2+)-binding residues include Gln843, Glu859, and Asn861. An allosteric domain region spans residues 956–1097 (SFCVPLPPSG…EMRQSDGPET (142 aa)). An MGS-like domain is found at 957–1113 (FCVPLPPSGI…WREYLGFKPT (157 aa)).

This sequence belongs to the CarB family. As to quaternary structure, heterodimer composed of 2 chains; the small (or glutamine) chain promotes the hydrolysis of glutamine to ammonia, which is used by the large (or ammonia) chain to synthesize carbamoyl phosphate. It depends on Mg(2+) as a cofactor. Requires Mn(2+) as cofactor.

The protein localises to the cytoplasm. It catalyses the reaction hydrogencarbonate + L-glutamine + 2 ATP + H2O = carbamoyl phosphate + L-glutamate + 2 ADP + phosphate + 2 H(+). The enzyme catalyses hydrogencarbonate + NH4(+) + 2 ATP = carbamoyl phosphate + 2 ADP + phosphate + 2 H(+). It participates in amino-acid biosynthesis; L-arginine biosynthesis; carbamoyl phosphate from bicarbonate: step 1/1. Large subunit of the arginine-specific carbamoyl phosphate synthase (CPSase). CPSase catalyzes the formation of carbamoyl phosphate from the ammonia moiety of glutamine, hydrogencarbonate, and phosphate donated by ATP, constituting the first step of 2 biosynthetic pathways, one leading to arginine and/or urea and the other to pyrimidine nucleotides. The large subunit (synthetase) binds the substrates ammonia (free or transferred from glutamine from the small subunit), hydrogencarbonate and ATP and carries out an ATP-coupled ligase reaction, activating hydrogencarbonate by forming carboxy phosphate which reacts with ammonia to form carbamoyl phosphate. This chain is Carbamoyl phosphate synthase arginine-specific large chain (CPA2), found in Eremothecium gossypii (strain ATCC 10895 / CBS 109.51 / FGSC 9923 / NRRL Y-1056) (Yeast).